We begin with the raw amino-acid sequence, 117 residues long: Prefoldin subunit beta (117 aa).

This sequence belongs to the prefoldin subunit beta family. In terms of assembly, heterohexamer of two alpha and four beta subunits.

Its subcellular location is the cytoplasm. In terms of biological role, molecular chaperone capable of stabilizing a range of proteins. Seems to fulfill an ATP-independent, HSP70-like function in archaeal de novo protein folding. In Pyrococcus furiosus (strain ATCC 43587 / DSM 3638 / JCM 8422 / Vc1), this protein is Prefoldin subunit beta.